Consider the following 238-residue polypeptide: 1-(5-phosphoribosyl)-5-[(5-phosphoribosylamino)methylideneamino] imidazole-4-carboxamide isomerase (238 aa).

Asp-8 serves as the catalytic Proton acceptor. The Proton donor role is filled by Asp-129.

Belongs to the HisA/HisF family.

The protein resides in the cytoplasm. The enzyme catalyses 1-(5-phospho-beta-D-ribosyl)-5-[(5-phospho-beta-D-ribosylamino)methylideneamino]imidazole-4-carboxamide = 5-[(5-phospho-1-deoxy-D-ribulos-1-ylimino)methylamino]-1-(5-phospho-beta-D-ribosyl)imidazole-4-carboxamide. It participates in amino-acid biosynthesis; L-histidine biosynthesis; L-histidine from 5-phospho-alpha-D-ribose 1-diphosphate: step 4/9. The polypeptide is 1-(5-phosphoribosyl)-5-[(5-phosphoribosylamino)methylideneamino] imidazole-4-carboxamide isomerase (Paracoccus denitrificans (strain Pd 1222)).